The following is a 410-amino-acid chain: Replication-associated protein G2P (410 aa).

An N-formylmethionine modification is found at Met-1.

This sequence belongs to the inovirus G2P protein family.

It catalyses the reaction ATP + (deoxyribonucleotide)n-3'-hydroxyl + 5'-phospho-(deoxyribonucleotide)m = (deoxyribonucleotide)n+m + AMP + diphosphate.. In terms of biological role, isoform G2P plays an essential role in viral DNA replication. Binds the origin of replication and cleaves the dsDNA replicative form I (RFI) and becomes covalently bound to it via phosphotyrosine bond, generating the dsDNA replicative form II (RFII). In turn, viral DNA replication initiates at the 3'-OH of the cleavage site. After one round of rolling circle synthesis, protein G2P is linked to the newly synthesized ssDNA and joins the ends of the displaced strand to generate a circular single-stranded molecule ready to be packed into a virion. Isoform G10P protein binds to double-stranded DNA and prevents hydrolysis by nucleases. Additionally, G10P is an inhibitor of DNA replication and may have a role in the transition from semiconservative replicative form DNA replication to single-stranded DNA synthesis in the life cycle. The sequence is that of Replication-associated protein G2P (II) from Enterobacteria phage fd (Bacteriophage fd).